Here is a 215-residue protein sequence, read N- to C-terminus: 3,4-dihydroxy-2-butanone 4-phosphate synthase (215 aa).

D-ribulose 5-phosphate is bound by residues Arg-37 to Glu-38, Asp-42, Arg-150 to Thr-154, and Glu-175. Residue Glu-38 participates in Mg(2+) binding. His-153 serves as a coordination point for Mg(2+).

The protein belongs to the DHBP synthase family. Homodimer. Requires Mg(2+) as cofactor. The cofactor is Mn(2+).

The catalysed reaction is D-ribulose 5-phosphate = (2S)-2-hydroxy-3-oxobutyl phosphate + formate + H(+). It functions in the pathway cofactor biosynthesis; riboflavin biosynthesis; 2-hydroxy-3-oxobutyl phosphate from D-ribulose 5-phosphate: step 1/1. Functionally, catalyzes the conversion of D-ribulose 5-phosphate to formate and 3,4-dihydroxy-2-butanone 4-phosphate. The polypeptide is 3,4-dihydroxy-2-butanone 4-phosphate synthase (Desulfatibacillum aliphaticivorans).